Here is a 216-residue protein sequence, read N- to C-terminus: uncharacterized protein (216 aa).

The chain crosses the membrane as a helical span at residues V39 to F59. Residues F59–I108 adopt a coiled-coil conformation.

It is found in the membrane. This is an uncharacterized protein from Aquifex aeolicus (strain VF5).